The chain runs to 161 residues: Phosphopantetheine adenylyltransferase (161 aa).

Ser-11 is a binding site for substrate. Residues 11–12 (SF) and His-19 contribute to the ATP site. Residues Lys-43, Leu-75, and Arg-89 each coordinate substrate. ATP is bound by residues 90-92 (GLR), Glu-100, and 125-131 (YSFISSS).

Belongs to the bacterial CoaD family. Homohexamer. Mg(2+) is required as a cofactor.

It localises to the cytoplasm. The enzyme catalyses (R)-4'-phosphopantetheine + ATP + H(+) = 3'-dephospho-CoA + diphosphate. The protein operates within cofactor biosynthesis; coenzyme A biosynthesis; CoA from (R)-pantothenate: step 4/5. In terms of biological role, reversibly transfers an adenylyl group from ATP to 4'-phosphopantetheine, yielding dephospho-CoA (dPCoA) and pyrophosphate. The chain is Phosphopantetheine adenylyltransferase from Staphylococcus haemolyticus (strain JCSC1435).